The primary structure comprises 424 residues: Gamma-glutamyl phosphate reductase (424 aa).

Belongs to the gamma-glutamyl phosphate reductase family.

It is found in the cytoplasm. The catalysed reaction is L-glutamate 5-semialdehyde + phosphate + NADP(+) = L-glutamyl 5-phosphate + NADPH + H(+). Its pathway is amino-acid biosynthesis; L-proline biosynthesis; L-glutamate 5-semialdehyde from L-glutamate: step 2/2. Functionally, catalyzes the NADPH-dependent reduction of L-glutamate 5-phosphate into L-glutamate 5-semialdehyde and phosphate. The product spontaneously undergoes cyclization to form 1-pyrroline-5-carboxylate. This is Gamma-glutamyl phosphate reductase from Dehalococcoides mccartyi (strain CBDB1).